A 240-amino-acid polypeptide reads, in one-letter code: Coiled-coil domain-containing protein 152 (240 aa).

The stretch at 55–223 forms a coiled coil; the sequence is MQTKEVAMKQ…LEQRLSVSKD (169 aa).

This is Coiled-coil domain-containing protein 152 (CCDC152) from Bos taurus (Bovine).